The following is a 160-amino-acid chain: Ribosome maturation factor RimP (160 aa).

This sequence belongs to the RimP family.

The protein localises to the cytoplasm. Functionally, required for maturation of 30S ribosomal subunits. This Geobacter sp. (strain M21) protein is Ribosome maturation factor RimP.